The primary structure comprises 461 residues: Homocitrate synthase (461 aa).

The Pyruvate carboxyltransferase domain maps to 4 to 259 (VGILDSTLRE…IEVVKLDKLQ (256 aa)). Residue arginine 12 participates in 2-oxoglutarate binding. Position 13 (glutamate 13) interacts with Mg(2+). 3 residues coordinate 2-oxoglutarate: histidine 76, arginine 136, and threonine 170. Mg(2+)-binding residues include histidine 198 and histidine 200. Histidine 292 acts as the Proton acceptor in catalysis.

The protein belongs to the alpha-IPM synthase/homocitrate synthase family. Homocitrate synthase LYS20/LYS21 subfamily. Mg(2+) is required as a cofactor. Mn(2+) serves as cofactor.

It catalyses the reaction acetyl-CoA + 2-oxoglutarate + H2O = (2R)-homocitrate + CoA + H(+). It functions in the pathway amino-acid biosynthesis; L-lysine biosynthesis via AAA pathway; L-alpha-aminoadipate from 2-oxoglutarate: step 1/5. In terms of biological role, catalyzes the aldol-type condensation of 2-oxoglutarate with acetyl-CoA to yield homocitrate. Carries out the first step of the alpha-aminoadipate (AAA) lysine biosynthesis pathway. This chain is Homocitrate synthase, found in Saccharolobus solfataricus (strain ATCC 35092 / DSM 1617 / JCM 11322 / P2) (Sulfolobus solfataricus).